Consider the following 1985-residue polypeptide: Voltage-dependent L-type calcium channel subunit alpha-1F (1985 aa).

Residues 1-11 (MSESEVGKDTT) are compositionally biased toward basic and acidic residues. Residues 1-56 (MSESEVGKDTTPEPSPANGTGPGPEWGLCPGPPTVGTDTSGASGLGTPRRRTQHNK) are disordered. Topologically, residues 1-92 (MSESEVGKDT…RSCISIVEWK (92 aa)) are cytoplasmic. An I repeat occupies 79–375 (NPIRRSCISI…LVLGVLSGEF (297 aa)). The chain crosses the membrane as a helical span at residues 93–111 (PFDILILLTIFANCVALGV). Topologically, residues 112-129 (YIPFPEDDSNTANHNLEQ) are extracellular. Residues 130–149 (VEYVFLVIFTVETVLKIVAY) traverse the membrane as a helical segment. Residues 150–161 (GLVLHPSAYIRN) are Cytoplasmic-facing. The helical transmembrane segment at 162-180 (GWNLLDFIIVVVGLFSVLL) threads the bilayer. Over 181-201 (EQGPGRPGDAPHTGGKPGGFD) the chain is Extracellular. The chain crosses the membrane as a helical span at residues 202–220 (VKALRAFRVLRPLRLVSGV). At 221–239 (PSLHIVVNSIMKALVPLLH) the chain is on the cytoplasmic side. A helical membrane pass occupies residues 240–259 (IALLVLFVIIIYAIIGLELF). At 260-347 (LGRMHKTCYF…WMQDAMGYEL (88 aa)) the chain is on the extracellular side. The N-linked (GlcNAc...) asparagine glycan is linked to Asn-295. Glu-330 contacts Ca(2+). The helical transmembrane segment at 348 to 372 (PWVYFVSLVIFGSFFVLNLVLGVLS) threads the bilayer. Residues 373-529 (GEFSKEREKA…ARCRRAVKSN (157 aa)) are Cytoplasmic-facing. A binding to the beta subunit region spans residues 395–412 (QQMEEDLRGYLDWITQAE). Positions 455–469 (SHSTRSTHSTSSHAS) are enriched in low complexity. The disordered stretch occupies residues 455 to 490 (SHSTRSTHSTSSHASLPASDTGSMTDTPGDEDEEEG). One copy of the II repeat lies at 515-761 (NRGLRARCRR…VFLAIAVDNL (247 aa)). Residues 530–549 (ACYWAVLLLVFLNTLTIASE) form a helical membrane-spanning segment. Residues 550-564 (HHGQPLWLTQTQEYA) lie on the Extracellular side of the membrane. Residues 565-583 (NKVLLCLFTVEMLLKLYGL) traverse the membrane as a helical segment. The Cytoplasmic segment spans residues 584–591 (GPSVYVAS). Residues 592-610 (FFNRFDCFVVCGGILETTL) form a helical membrane-spanning segment. Over 611–620 (VEVGAMQPLG) the chain is Extracellular. A helical membrane pass occupies residues 621–639 (ISVLRCVRLLRIFKVTRHW). Over 640–658 (ASLSNLVASLLNSMKSIAS) the chain is Cytoplasmic. A helical transmembrane segment spans residues 659–679 (LLLLLFLFIIIFSLLGMQLFG). The Extracellular portion of the chain corresponds to 680-733 (GKFNFDQTHTKRSTFDTFPQALLTVFQILTGEDWNVVMYDGIMAYGGPFFPGML). Glu-711 is a binding site for Ca(2+). The chain crosses the membrane as a helical span at residues 734–758 (VCVYFIILFICGNYILLNVFLAIAV). The Cytoplasmic segment spans residues 759 to 876 (DNLASGDAGT…KACHTLIHHH (118 aa)). The tract at residues 766-834 (AGTAKDKGRE…EEEEENGAGH (69 aa)) is disordered. The segment covering 768 to 787 (TAKDKGREKSSEGNPPKENK) has biased composition (basic and acidic residues). The segment covering 810–830 (MEEEEEEEEEEEEEEEEEEEN) has biased composition (acidic residues). Residues 858 to 1140 (CLSQTNPLRK…FFMMNIFVGF (283 aa)) form an III repeat. Residues 877-895 (IFTSLILVFIILSSVSLAA) form a helical membrane-spanning segment. At 896-911 (EDPIRAHSFRNHILGY) the chain is on the extracellular side. Residues 912–931 (FDYAFTSIFTVEILLKMTVF) form a helical membrane-spanning segment. At 932-943 (GAFLHRGSFCRS) the chain is on the cytoplasmic side. A helical membrane pass occupies residues 944-962 (WFNLLDLLVVSVSLISFGI). Residues 963–968 (HSSAIS) are Extracellular-facing. Residues 969–988 (VVKILRVLRVLRPLRAINRA) traverse the membrane as a helical segment. The Cytoplasmic portion of the chain corresponds to 989-1007 (KGLKHVVQCVFVAIRTIGN). A helical transmembrane segment spans residues 1008-1027 (IMIVTTLLQFMFACIGVQLF). The Extracellular segment spans residues 1028–1117 (KGKFYSCTDE…EGPIYNYHVE (90 aa)). Positions 1065–1155 (RLWVNSDFNF…RAQGEQEYQN (91 aa)) are dihydropyridine binding. Glu-1091 is a Ca(2+) binding site. A helical membrane pass occupies residues 1118–1138 (ISVFFIVYIIIIAFFMMNIFV). Over 1139–1195 (GFVIITFRAQGEQEYQNCELDKNQRQCVEYALKAQPLRRYIPKNPHQYRVWATVNSR) the chain is Cytoplasmic. The IV repeat unit spans residues 1182–1449 (NPHQYRVWAT…LFVAVIMDNF (268 aa)). The chain crosses the membrane as a helical span at residues 1196-1214 (AFEYLMFLLILLNTVALAM). Topologically, residues 1215 to 1229 (QHYEQTAPFNYAMDI) are extracellular. Residues 1230-1249 (LNMVFTGLFTIEMVLKIIAF) traverse the membrane as a helical segment. Over 1250 to 1256 (KPKHYFA) the chain is Cytoplasmic. A helical transmembrane segment spans residues 1257 to 1278 (DAWNTFDALIVVGSVVDIAVTE). At 1279–1295 (VNNGGHLGESSEDTSRI) the chain is on the extracellular side. A helical transmembrane segment spans residues 1296–1315 (SITFFRLFRVMRLVKLLSKG). The Cytoplasmic segment spans residues 1316 to 1334 (EGIRTLLWTFIKSFQALPY). A helical membrane pass occupies residues 1335–1354 (VALLIAMIFFIYAVIGMQMF). At 1355–1421 (GLVALQDGTQ…GEEFTCGSSF (67 aa)) the chain is on the extracellular side. The interval 1402-1468 (RCDPESDFGP…LGPHHLDEFK (67 aa)) is dihydropyridine binding. The segment at 1414-1457 (EFTCGSSFAIVYFISFFMLCAFLIINLFVAVIMDNFDYLTRDWS) is phenylalkylamine binding. Residues 1422-1446 (AIVYFISFFMLCAFLIINLFVAVIM) traverse the membrane as a helical segment. At 1447–1982 (DNFDYLTRDW…EDLGDEMACV (536 aa)) the chain is on the cytoplasmic side. Disordered stretches follow at residues 1643–1729 (VTEE…PHRR) and 1746–1778 (LKGT…SFEP). The span at 1644–1665 (TEEEEEEEEAVGQEAEEEEAEN) shows a compositional bias: acidic residues. 2 stretches are compositionally biased toward polar residues: residues 1675-1687 (DSQP…SRIS) and 1713-1724 (NSRQPSVIQAGS). The segment covering 1767–1776 (DLDRAGRDSF) has biased composition (basic and acidic residues).

It belongs to the calcium channel alpha-1 subunit (TC 1.A.1.11) family. CACNA1F subfamily. In terms of assembly, voltage-dependent calcium channels are multisubunit complexes, consisting of alpha-1, alpha-2, beta and delta subunits in a 1:1:1:1 ratio. The channel activity is directed by the pore-forming and voltage-sensitive alpha-1 subunit. In many cases, this subunit is sufficient to generate voltage-sensitive calcium channel activity. The auxiliary subunits beta and alpha-2/delta linked by a disulfide bridge regulate the channel activity. Interacts (via IQ domain) with CABP4; in a calcium independent manner. As to expression, expressed in the inner and outer nuclear layers and the genglion cell layer of the retina.

The protein resides in the membrane. The catalysed reaction is Ca(2+)(in) = Ca(2+)(out). In terms of biological role, voltage-sensitive calcium channels (VSCC) mediate the entry of calcium ions into excitable cells and are also involved in a variety of calcium-dependent processes, including muscle contraction, hormone or neurotransmitter release, gene expression, cell motility, cell division and cell death. The isoform alpha-1F gives rise to L-type calcium currents. Long-lasting (L-type) calcium channels belong to the 'high-voltage activated' (HVA) group. They are blocked by dihydropyridines (DHP), phenylalkylamines, and by benzothiazepines. Activates at more negative voltages and does not undergo calcium-dependent inactivation (CDI), due to incoming calcium ions, during depolarization. The sequence is that of Voltage-dependent L-type calcium channel subunit alpha-1F from Mus musculus (Mouse).